Here is a 1140-residue protein sequence, read N- to C-terminus: MSHHYVVTAQKPTAVVACLTGNFTSPTDLNLIIARNNQVEIDLVTPEGLRPLKEININGTIAVMRHFRPPDSNKDLLFILTRRYNVMILEARMVNDVITVVTKANGNVSDSVGIPSEGGVIAAIDPKARVIGMCLYQGLFTIIPMDKDASELKATNLRMDELNVYDVEFLHGCLNPTVIVIHKDSDGRHVKSHEINLRDKEFMKIAWKQDNVETEATMLIPVPSPIGGVIVIGRESIVYHDGSNYHAVAPLTFRQSTINCYARVSSNGLRYLLGNMDGQLYMLFLGTAETSKGVTVKDIKVEQLGEISIPECITYLDNGFLYIGARHGDSQLVRLNSEAIDGSYVVPVENFTNLAPILDIAVVDLDRQGQGQIITCSGSFKDGSLRIIRIGIGIQEHACIDLPGIKGMWSLKVGVDESPYENTLVLAFVGHTRILTLSGEEVEETEIPGFASDLQTFLCSNVDYDQLIQVTSDSVRLVSSATKALVAEWRPTGDRTIGVVSCNTTQILVASACDIFYIVIEDGSLREQSRRTLAYEVACLDITPLDETQKKSDLVAVGLWTDISAVILSLPDLETIYTEKLSGEIIPRSILMTTFEGIHYLLCALGDGSMYYFIMDQTTGQLTDKKKVTLGTQPTTLRTFRSLSTTNVFACSDRPTVIYSSNHKLVFSNVNLKEVNHMCSLNAQAYPDSLALANKNAVILGTIDEIQKLHIRTVPLGEGPRRIAYQESSQTFAVSTLRIDVHGRGGAKPLRNSASTQAQNITCSSNFLPKPGGGNSTAANAEVGQEIDVHNLLVIDQNTFEVLHAHQFVAPETISSLMSAKLGDDPNTYYVVATSLVIPEEPEPKVGRIIIFHYHENKLTQVAETKVDGTCYALVEFNGKVLAGIGSFVRLYEWTNEKELRMECNIQNMIAALFLKAKGDFILVGDLMRSITLLQHKQMEGIFVEIARDCEPKWMRAVEILDDDTFLGSETNGNLFVCQKDSAATTDEERQLLPELARFHLGDTVNVFRHGSLVMQNVGERTTPINGCVLYGTCNGAIGIVTQIPQDFYDFLHGLEERLKKIIKSVGKIEHTYYRNFQINSKVEPSEGFIDGDLIESFLDLSRDKMRDAVQGLELTLNGERKSADVEDVIKIVEDLTRMH.

Belongs to the DDB1 family. As to quaternary structure, component of the UV-DDB complex which includes DDB1 and DDB2; the heterodimer dimerizes to give rise to a heterotetramer when bound to damaged DNA. The UV-DDB complex interacts with monoubiquitinated histone H2A and binds to XPC via the DDB2 subunit. Component of numerous DCX (DDB1-CUL4-X-box) E3 ubiquitin-protein ligase complexes which consist of a core of DDB1, CUL4A or CUL4B and RBX1. DDB1 may recruit specific substrate targeting subunits to the DCX complex. These substrate targeting subunits are generally known as DCAF (DDB1- and CUL4-associated factor) or CDW (CUL4-DDB1-associated WD40-repeat) proteins. Interacts with Fbw5 and gig. May interact with ohgt.

Its subcellular location is the cytoplasm. The protein localises to the nucleus. It functions in the pathway protein modification; protein ubiquitination. Functionally, protein, which is both involved in DNA repair and protein ubiquitination, as part of the UV-DDB complex and DCX (DDB1-CUL4-X-box) complexes, respectively. Core component of the UV-DDB complex (UV-damaged DNA-binding protein complex), a complex that recognizes UV-induced DNA damage and recruit proteins of the nucleotide excision repair pathway (the NER pathway) to initiate DNA repair. The UV-DDB complex preferentially binds to cyclobutane pyrimidine dimers (CPD), 6-4 photoproducts (6-4 PP), apurinic sites and short mismatches. Also functions as a component of numerous distinct DCX (DDB1-CUL4-X-box) E3 ubiquitin-protein ligase complexes which mediate the ubiquitination and subsequent proteasomal degradation of target proteins. The functional specificity of the DCX E3 ubiquitin-protein ligase complex is determined by the variable substrate recognition component recruited by DDB1. Required for degradation of gig. Required for genomic stability in the face of endogenous DNA lesions and for the response to MMS-induced DNA damage. Required for normal wing development. This Drosophila melanogaster (Fruit fly) protein is DNA damage-binding protein 1 (pic).